A 342-amino-acid polypeptide reads, in one-letter code: Heat-inducible transcription repressor HrcA (342 aa).

The protein belongs to the HrcA family.

Its function is as follows. Negative regulator of class I heat shock genes (grpE-dnaK-dnaJ and groELS operons). Prevents heat-shock induction of these operons. This is Heat-inducible transcription repressor HrcA from Shouchella clausii (strain KSM-K16) (Alkalihalobacillus clausii).